Consider the following 261-residue polypeptide: MSRTSSQNQEIINNKHRLKTSKSSKPSKSSKPSKSSKPSKSSKTSKSSRSSGSKSSRSKTGKTSSRKDKYKEEYSQDQYPDEQEYEQEYEQEYEQEYQDNGEQTEEFVENNQDAYPEDIENDERQTQSNKELDTINKKTKERLKNKINKWMDHDDNIKRLNAKMKAFKDAKKQEEESIIKLIDKFEIGESKMDIRDDNKNLRGRVYKHKSVTKGAIKEDIIRDALMEVVRNERKVAELVKKIESKRPINERYYLKRTKGNN.

The span at 1–12 (MSRTSSQNQEII) shows a compositional bias: polar residues. The interval 1–139 (MSRTSSQNQE…KELDTINKKT (139 aa)) is disordered. Residues 23 to 55 (SSKPSKSSKPSKSSKPSKSSKTSKSSRSSGSKS) show a composition bias toward low complexity. The span at 65 to 74 (SRKDKYKEEY) shows a compositional bias: basic and acidic residues. A compositionally biased stretch (acidic residues) spans 79–108 (YPDEQEYEQEYEQEYEQEYQDNGEQTEEFV). Residues 122–139 (DERQTQSNKELDTINKKT) are compositionally biased toward basic and acidic residues. Coiled-coil stretches lie at residues 151 to 181 (MDHDDNIKRLNAKMKAFKDAKKQEEESIIKL) and 218 to 243 (EDIIRDALMEVVRNERKVAELVKKIE).

This is an uncharacterized protein from Acanthamoeba polyphaga (Amoeba).